The following is a 367-amino-acid chain: Heme A synthase (367 aa).

5 helical membrane passes run 25–45 (AIRI…LVGG), 111–131 (FLAR…VLTG), 137–157 (LWLP…IGWW), 174–194 (LATH…FMRA), and 211–231 (LAGL…LVAG). His-274 lines the heme pocket. 3 consecutive transmembrane segments (helical) span residues 276–296 (LGAY…LRAA), 305–325 (SVVL…TLLL), and 327–347 (VPLH…GFAI). A heme-binding site is contributed by His-335.

It belongs to the COX15/CtaA family. Type 2 subfamily. As to quaternary structure, interacts with CtaB. Heme b serves as cofactor.

The protein resides in the cell membrane. The enzyme catalyses Fe(II)-heme o + 2 A + H2O = Fe(II)-heme a + 2 AH2. It functions in the pathway porphyrin-containing compound metabolism; heme A biosynthesis; heme A from heme O: step 1/1. In terms of biological role, catalyzes the conversion of heme O to heme A by two successive hydroxylations of the methyl group at C8. The first hydroxylation forms heme I, the second hydroxylation results in an unstable dihydroxymethyl group, which spontaneously dehydrates, resulting in the formyl group of heme A. The protein is Heme A synthase of Rhizobium rhizogenes (strain K84 / ATCC BAA-868) (Agrobacterium radiobacter).